Reading from the N-terminus, the 247-residue chain is tRNA pseudouridine synthase A (247 aa).

The Nucleophile role is filled by aspartate 52. A substrate-binding site is contributed by tyrosine 113.

The protein belongs to the tRNA pseudouridine synthase TruA family. Homodimer.

It carries out the reaction uridine(38/39/40) in tRNA = pseudouridine(38/39/40) in tRNA. Functionally, formation of pseudouridine at positions 38, 39 and 40 in the anticodon stem and loop of transfer RNAs. The polypeptide is tRNA pseudouridine synthase A (Bartonella henselae (strain ATCC 49882 / DSM 28221 / CCUG 30454 / Houston 1) (Rochalimaea henselae)).